The chain runs to 217 residues: Trimethylamine corrinoid protein (217 aa).

Residues 1 to 92 form the B12-binding N-terminal domain; it reads MANKEEIIAK…EMEKRKSQTK (92 aa). In terms of domain architecture, B12-binding spans 94–217; that stretch reads LGTVAIGTIE…VAKVKAALNV (124 aa). His107 is a methylcob(III)alamin binding site.

The protein belongs to the methylamine corrinoid protein family. Can form a complex with MttB.

Its pathway is one-carbon metabolism; methanogenesis from trimethylamine. Its function is as follows. Acts probably as a methyl group carrier between MttB and either MtbA or MtaA. This Methanosarcina barkeri protein is Trimethylamine corrinoid protein.